We begin with the raw amino-acid sequence, 320 residues long: Malate dehydrogenase (320 aa).

Residues 10–15 (GAGNIG) and D34 contribute to the NAD(+) site. Residues R83 and R89 each coordinate substrate. NAD(+) is bound by residues N96 and 119–121 (ITN). Positions 121 and 152 each coordinate substrate. The Proton acceptor role is filled by H176.

This sequence belongs to the LDH/MDH superfamily. MDH type 3 family.

It catalyses the reaction (S)-malate + NAD(+) = oxaloacetate + NADH + H(+). Catalyzes the reversible oxidation of malate to oxaloacetate. This Sphingopyxis alaskensis (strain DSM 13593 / LMG 18877 / RB2256) (Sphingomonas alaskensis) protein is Malate dehydrogenase.